A 276-amino-acid chain; its full sequence is Undecaprenyl-diphosphatase (276 aa).

Transmembrane regions (helical) follow at residues 46-66, 94-114, 122-142, 152-172, 196-216, 226-246, and 253-273; these read AGAS…LIYF, LMGI…VKAI, LWVV…AERV, LGIG…IPGV, SFLL…IAEF, LGTL…IRFL, and VFIV…ALGF.

This sequence belongs to the UppP family.

It is found in the cell inner membrane. It catalyses the reaction di-trans,octa-cis-undecaprenyl diphosphate + H2O = di-trans,octa-cis-undecaprenyl phosphate + phosphate + H(+). Catalyzes the dephosphorylation of undecaprenyl diphosphate (UPP). Confers resistance to bacitracin. The polypeptide is Undecaprenyl-diphosphatase (Synechococcus sp. (strain JA-3-3Ab) (Cyanobacteria bacterium Yellowstone A-Prime)).